The primary structure comprises 379 residues: EP300-interacting inhibitor of differentiation 3 (379 aa).

Residues Leu32 to Thr58 adopt a coiled-coil conformation.

This sequence belongs to the NSE4 family. Component of the SMC5-SMC6 complex which consists at least of SMC5, SMC6, NSMCE2, NSMCE1, NSMCE4A or EID3 and NSMCE3. NSMCE1, NSMCE4A or EID3 and NSMCE3 probably form a subcomplex that bridges the head domains of the SMC5:SMC6 heterodimer. Homodimer, and heterodimer with EID2. Interacts with the C-terminal region of CREBBP.

It is found in the nucleus. Its subcellular location is the cytoplasm. It localises to the chromosome. The protein localises to the telomere. Functionally, tissue-specific component of the SMC5-SMC6 complex, a complex involved in repair of DNA double-strand breaks by homologous recombination. The complex may promote sister chromatid homologous recombination by recruiting the SMC1-SMC3 cohesin complex to double-strand breaks. The complex is required for telomere maintenance via recombination and mediates sumoylation of shelterin complex (telosome) components. In terms of biological role, acts as a repressor of nuclear receptor-dependent transcription possibly by interfering with CREBBP-dependent coactivation. May function as a coinhibitor of other CREBBP/EP300-dependent transcription factors. This is EP300-interacting inhibitor of differentiation 3 from Bos taurus (Bovine).